We begin with the raw amino-acid sequence, 434 residues long: Glutamyl-tRNA reductase 2 (434 aa).

Substrate contacts are provided by residues 57–60, Ser-113, 118–120, and Gln-124; these read TCNR and DFE. Cys-58 (nucleophile) is an active-site residue. 193-198 lines the NADP(+) pocket; that stretch reads GTGKIG.

It belongs to the glutamyl-tRNA reductase family. As to quaternary structure, homodimer.

The catalysed reaction is (S)-4-amino-5-oxopentanoate + tRNA(Glu) + NADP(+) = L-glutamyl-tRNA(Glu) + NADPH + H(+). It participates in porphyrin-containing compound metabolism; protoporphyrin-IX biosynthesis; 5-aminolevulinate from L-glutamyl-tRNA(Glu): step 1/2. Functionally, catalyzes the NADPH-dependent reduction of glutamyl-tRNA(Glu) to glutamate 1-semialdehyde (GSA). The chain is Glutamyl-tRNA reductase 2 from Flavobacterium johnsoniae (strain ATCC 17061 / DSM 2064 / JCM 8514 / BCRC 14874 / CCUG 350202 / NBRC 14942 / NCIMB 11054 / UW101) (Cytophaga johnsonae).